The primary structure comprises 477 residues: Zinc metalloproteinase/disintegrin (477 aa).

Residues 1 to 20 (MIEVLLVTICLAAFPYQGSS) form the signal peptide. A propeptide spanning residues 21-187 (IILESGNVND…PIKKASQSNL (167 aa)) is cleaved from the precursor. In terms of domain architecture, Peptidase M12B spans 193-389 (RYIELFLVVD…DNPQCILNKQ (197 aa)). Glutamate 196 and aspartate 280 together coordinate Ca(2+). Disulfide bonds link cysteine 304–cysteine 384, cysteine 344–cysteine 368, and cysteine 346–cysteine 351. Position 329 (histidine 329) interacts with Zn(2+). The active site involves glutamate 330. The Zn(2+) site is built by histidine 333 and histidine 339. Cysteine 384 and asparagine 387 together coordinate Ca(2+). Positions 390–404 (LRTDTVSTPVSGKNF) are excised as a propeptide. One can recognise a Disintegrin domain in the interval 396 to 477 (STPVSGKNFG…AGCPRNPFHA (82 aa)). Disulfide bonds link cysteine 410–cysteine 425, cysteine 412–cysteine 420, cysteine 419–cysteine 442, cysteine 433–cysteine 439, cysteine 438–cysteine 463, and cysteine 451–cysteine 470. The short motif at 455–457 (RGD) is the Cell attachment site element.

It belongs to the venom metalloproteinase (M12B) family. P-II subfamily. P-IIa sub-subfamily. In terms of assembly, monomer. It depends on Zn(2+) as a cofactor. In terms of tissue distribution, expressed by the venom gland.

Its subcellular location is the secreted. Its activity is regulated as follows. Inhibited by 1,10-phenanthroline and EDTA. Its function is as follows. Impairs hemostasis in the envenomed animal. Does not exhibit detectable plasminogen activating activity. Has hemagglutinating activity on red blood cells. Cleaves insulin B chain at '38-Ala-|-Leu-39' and '40-Tyr-|-Leu-41' bonds. Functionally, this recombinant protein shows high inhibitory activity on collagen-induced platelet aggregation. The sequence is that of Zinc metalloproteinase/disintegrin from Bothrops jararaca (Jararaca).